Reading from the N-terminus, the 206-residue chain is Probable 5-formyltetrahydrofolate cyclo-ligase (206 aa).

Residues 8-12 (KSELR) and Arg-12 contribute to the ATP site. Substrate contacts are provided by residues Val-54, Glu-59, and 146-150 (HGKGY). 143 to 151 (RCGHGKGYY) contributes to the ATP binding site. The Mg(2+) site is built by Asp-152 and Asp-188.

This sequence belongs to the 5-formyltetrahydrofolate cyclo-ligase family. Monomer. The cofactor is Mg(2+).

It is found in the cytoplasm. It carries out the reaction (6S)-5-formyl-5,6,7,8-tetrahydrofolate + ATP = (6R)-5,10-methenyltetrahydrofolate + ADP + phosphate. In terms of biological role, contributes to tetrahydrofolate metabolism. Helps regulate carbon flow through the folate-dependent one-carbon metabolic network that supplies carbon for the biosynthesis of purines, thymidine and amino acids. Catalyzes the irreversible conversion of 5-formyltetrahydrofolate (5-CHO-H(4)PteGlu) to yield 5,10-methenyltetrahydrofolate. This Caenorhabditis elegans protein is Probable 5-formyltetrahydrofolate cyclo-ligase.